Consider the following 439-residue polypeptide: GlutamylGlutaminyl-tRNA synthetase (439 aa).

The short motif at 6-16 (PSPTGDMHIGN) is the 'HIGH' region element. The 'KMSKS' region motif lies at 232–236 (KMSKR). Residue Lys235 coordinates ATP.

Belongs to the class-I aminoacyl-tRNA synthetase family. Glutamate--tRNA ligase type 1 subfamily. Monomer.

It localises to the cytoplasm. It carries out the reaction tRNA(Glu) + L-glutamate + ATP = L-glutamyl-tRNA(Gln) + AMP + diphosphate. Functionally, aminoacylates tRNA(Gln) with glutamate. Does not aminoacylate tRNA(Glu). This Helicobacter pylori (strain ATCC 700392 / 26695) (Campylobacter pylori) protein is GlutamylGlutaminyl-tRNA synthetase (gltX2).